We begin with the raw amino-acid sequence, 547 residues long: Chaperonin GroEL (547 aa).

Residues 30 to 33, lysine 51, 87 to 91, glycine 415, and aspartate 496 each bind ATP; these read TLGP and DGTTT. The segment at 527–547 is disordered; that stretch reads SDKAEPMPMRGGMGGMGGMDF. Positions 537–547 are enriched in gly residues; sequence GGMGGMGGMDF.

Belongs to the chaperonin (HSP60) family. In terms of assembly, forms a cylinder of 14 subunits composed of two heptameric rings stacked back-to-back. Interacts with the co-chaperonin GroES.

The protein resides in the cytoplasm. The enzyme catalyses ATP + H2O + a folded polypeptide = ADP + phosphate + an unfolded polypeptide.. Functionally, together with its co-chaperonin GroES, plays an essential role in assisting protein folding. The GroEL-GroES system forms a nano-cage that allows encapsulation of the non-native substrate proteins and provides a physical environment optimized to promote and accelerate protein folding. The polypeptide is Chaperonin GroEL (Rickettsia rickettsii (strain Sheila Smith)).